Consider the following 489-residue polypeptide: ATP synthase subunit beta 1 (489 aa).

G159–T166 is an ATP binding site. Over residues E465–A477 the composition is skewed to basic and acidic residues. The tract at residues E465 to A489 is disordered.

Belongs to the ATPase alpha/beta chains family. As to quaternary structure, F-type ATPases have 2 components, CF(1) - the catalytic core - and CF(0) - the membrane proton channel. CF(1) has five subunits: alpha(3), beta(3), gamma(1), delta(1), epsilon(1). CF(0) has three main subunits: a(1), b(2) and c(9-12). The alpha and beta chains form an alternating ring which encloses part of the gamma chain. CF(1) is attached to CF(0) by a central stalk formed by the gamma and epsilon chains, while a peripheral stalk is formed by the delta and b chains.

It is found in the cell inner membrane. The catalysed reaction is ATP + H2O + 4 H(+)(in) = ADP + phosphate + 5 H(+)(out). Functionally, produces ATP from ADP in the presence of a proton gradient across the membrane. The catalytic sites are hosted primarily by the beta subunits. The polypeptide is ATP synthase subunit beta 1 (Marinomonas sp. (strain MWYL1)).